A 572-amino-acid chain; its full sequence is Proline--tRNA ligase (572 aa).

This sequence belongs to the class-II aminoacyl-tRNA synthetase family. ProS type 1 subfamily. As to quaternary structure, homodimer.

It localises to the cytoplasm. The catalysed reaction is tRNA(Pro) + L-proline + ATP = L-prolyl-tRNA(Pro) + AMP + diphosphate. Its function is as follows. Catalyzes the attachment of proline to tRNA(Pro) in a two-step reaction: proline is first activated by ATP to form Pro-AMP and then transferred to the acceptor end of tRNA(Pro). As ProRS can inadvertently accommodate and process non-cognate amino acids such as alanine and cysteine, to avoid such errors it has two additional distinct editing activities against alanine. One activity is designated as 'pretransfer' editing and involves the tRNA(Pro)-independent hydrolysis of activated Ala-AMP. The other activity is designated 'posttransfer' editing and involves deacylation of mischarged Ala-tRNA(Pro). The misacylated Cys-tRNA(Pro) is not edited by ProRS. In Enterococcus faecalis (strain ATCC 700802 / V583), this protein is Proline--tRNA ligase.